Here is a 754-residue protein sequence, read N- to C-terminus: Phosphoinositide 3-kinase regulatory subunit 6 (754 aa).

A disordered region spans residues 343-363; the sequence is ERDLPTGADELPAPGSPEMER.

In terms of assembly, heterodimer of a catalytic subunit (PIK3CG) and a regulatory (PIK3R6) subunit. The binding of PIK3R6 to PIK3CG may exclude the binding of PIK3R5 to PIK3CG. Interacts with beta-gamma G protein dimers. Interacts with PDE3B and RAPGEF3; form a signaling complex that regulates phosphatidylinositol 3-kinase gamma in angiogenesis.

It localises to the cytoplasm. The protein resides in the cell membrane. Regulatory subunit of the PI3K gamma complex. Acts as an adapter to drive activation of PIK3CG by beta-gamma G protein dimers. The PIK3CG:PIK3R6 heterodimer is much less sensitive to beta-gamma G protein dimers than PIK3CG:PIK3R5 and its membrane recruitment and beta-gamma G protein dimer-dependent activation requires HRAS bound to PIK3CG. Recruits of the PI3K gamma complex to a PDE3B:RAPGEF3 signaling complex involved in angiogenesis; signaling seems to involve RRAS. This is Phosphoinositide 3-kinase regulatory subunit 6 (PIK3R6) from Homo sapiens (Human).